We begin with the raw amino-acid sequence, 273 residues long: Proteasome subunit beta type-10 (273 aa).

Residue Met1 is modified to N-acetylmethionine. Positions 1 to 39 are cleaved as a propeptide — removed in mature form; sequence MLKQAVEHRGGFSFENCQRNASLEHVLPGLRVPLARKTG. Residue Thr40 is the Nucleophile of the active site. Phosphoserine is present on Ser230.

The protein belongs to the peptidase T1B family. The 26S proteasome consists of a 20S proteasome core and two 19S regulatory subunits. The 20S proteasome core is composed of 28 subunits that are arranged in four stacked rings, resulting in a barrel-shaped structure. The two end rings are each formed by seven alpha subunits, and the two central rings are each formed by seven beta subunits. The catalytic chamber with the active sites is on the inside of the barrel. Component of the immunoproteasome, where it displaces the equivalent housekeeping subunit PSMB7. Component of the spermatoproteasome, a form of the proteasome specifically found in testis. In terms of processing, autocleaved. The resulting N-terminal Thr residue of the mature subunit is responsible for the nucleophile proteolytic activity.

It localises to the cytoplasm. Its subcellular location is the nucleus. It catalyses the reaction Cleavage of peptide bonds with very broad specificity.. The proteasome is a multicatalytic proteinase complex which is characterized by its ability to cleave peptides with Arg, Phe, Tyr, Leu, and Glu adjacent to the leaving group at neutral or slightly basic pH. The proteasome has an ATP-dependent proteolytic activity. This subunit is involved in antigen processing to generate class I binding peptides. The chain is Proteasome subunit beta type-10 (Psmb10) from Rattus norvegicus (Rat).